A 646-amino-acid polypeptide reads, in one-letter code: mRNA 3'-end-processing protein RNA14 (646 aa).

HAT repeat units follow at residues 46–78 (DDYDNSRKLYAELHERFPLYSPLWTMHLQSELQ), 80–114 (NEFDTVEKLLAQCLAGDLENNDLSLWSTYLDYVRR), 128–160 (VVIKAFKLVMDKCATFEPKASSFWNDYLGFLHQ), 171–204 (QRLDMIREVYKKMLCVPFDKLEKMWNQYTLWEQE), 249–281 (ANKNNIPQYVLPCKKNDHTQLEAWLKWIAWEKE), and 290–322 (ALKDRVTYVYKQAIQQLLFEPEIWYDYVMYEFD). Residues 571–599 (DGDPSGVDKSFKKRQIENDENLPDSKRQK) are disordered.

Its subcellular location is the nucleus. The protein resides in the cytoplasm. Component of the cleavage factor IA (CFIA) complex, which is involved in the endonucleolytic cleavage during polyadenylation-dependent pre-mRNA 3'-end formation. The sequence is that of mRNA 3'-end-processing protein RNA14 (RNA14) from Candida glabrata (strain ATCC 2001 / BCRC 20586 / JCM 3761 / NBRC 0622 / NRRL Y-65 / CBS 138) (Yeast).